The chain runs to 232 residues: Phosphatidylserine decarboxylase proenzyme (232 aa).

Ser-190 acts as the Schiff-base intermediate with substrate; via pyruvic acid in catalysis. Ser-190 carries the post-translational modification Pyruvic acid (Ser); by autocatalysis.

This sequence belongs to the phosphatidylserine decarboxylase family. PSD-A subfamily. As to quaternary structure, heterodimer of a large membrane-associated beta subunit and a small pyruvoyl-containing alpha subunit. The cofactor is pyruvate. Post-translationally, is synthesized initially as an inactive proenzyme. Formation of the active enzyme involves a self-maturation process in which the active site pyruvoyl group is generated from an internal serine residue via an autocatalytic post-translational modification. Two non-identical subunits are generated from the proenzyme in this reaction, and the pyruvate is formed at the N-terminus of the alpha chain, which is derived from the carboxyl end of the proenzyme. The post-translation cleavage follows an unusual pathway, termed non-hydrolytic serinolysis, in which the side chain hydroxyl group of the serine supplies its oxygen atom to form the C-terminus of the beta chain, while the remainder of the serine residue undergoes an oxidative deamination to produce ammonia and the pyruvoyl prosthetic group on the alpha chain.

The protein resides in the cell membrane. It catalyses the reaction a 1,2-diacyl-sn-glycero-3-phospho-L-serine + H(+) = a 1,2-diacyl-sn-glycero-3-phosphoethanolamine + CO2. It functions in the pathway phospholipid metabolism; phosphatidylethanolamine biosynthesis; phosphatidylethanolamine from CDP-diacylglycerol: step 2/2. Its function is as follows. Catalyzes the formation of phosphatidylethanolamine (PtdEtn) from phosphatidylserine (PtdSer). The protein is Phosphatidylserine decarboxylase proenzyme of Agrobacterium fabrum (strain C58 / ATCC 33970) (Agrobacterium tumefaciens (strain C58)).